A 347-amino-acid chain; its full sequence is uncharacterized protein (347 aa).

An N-terminal signal peptide occupies residues 1-21 (MRYRIFLLFFFALLPTSLVWA).

This is an uncharacterized protein from Escherichia coli (strain K12).